Reading from the N-terminus, the 59-residue chain is uncharacterized protein (59 aa).

Residues 7 to 27 (LLLLVAIALISAFALTVTGVV) form a helical membrane-spanning segment.

It is found in the membrane. This is an uncharacterized protein from Pyrobaculum aerophilum (strain ATCC 51768 / DSM 7523 / JCM 9630 / CIP 104966 / NBRC 100827 / IM2).